The chain runs to 167 residues: Iron-sulfur cluster assembly protein 1 (167 aa).

The transit peptide at 1–50 (MMLKQAAKKALGLTSRQSTPWSVGILRTYHENVIDHYDNPRNVGSFDKND) directs the protein to the mitochondrion.

It belongs to the NifU family. As to quaternary structure, component of the core Fe-S cluster (ISC) assembly machinery. Interacts with HSCB. [2Fe-2S] cluster serves as cofactor. As to expression, expressed in roots, stems, leaves, flowers, pollen and siliques.

Its subcellular location is the mitochondrion matrix. The protein resides in the cytoplasm. It is found in the cytosol. It functions in the pathway cofactor biosynthesis; iron-sulfur cluster biosynthesis. Scaffold protein for the de novo synthesis of iron-sulfur (Fe-S) clusters within mitochondria, which is required for maturation of both mitochondrial and cytoplasmic [2Fe-2S] and [4Fe-4S] proteins. First, a [2Fe-2S] cluster is transiently assembled on the scaffold protein ISCU (ISU1, ISU2 or ISU3). In a second step, the cluster is released from ISCU, transferred to a glutaredoxin, followed by the formation of mitochondrial [2Fe-2S] proteins, the synthesis of [4Fe-4S] clusters and their target-specific insertion into the recipient apoproteins. Cluster assembly on ISCU depends on the function of the cysteine desulfurase complex NFS1-ISD11, which serves as the sulfur donor for cluster synthesis, the iron-binding protein frataxin as the putative iron donor, and the electron transfer chain comprised of ferredoxin reductase and ferredoxin, which receive their electrons from NADH. The sequence is that of Iron-sulfur cluster assembly protein 1 (ISU1) from Arabidopsis thaliana (Mouse-ear cress).